The following is a 251-amino-acid chain: Hydroxyacylglutathione hydrolase (251 aa).

Positions 53, 55, 57, 58, 110, 127, and 165 each coordinate Zn(2+).

This sequence belongs to the metallo-beta-lactamase superfamily. Glyoxalase II family. In terms of assembly, monomer. It depends on Zn(2+) as a cofactor.

It catalyses the reaction an S-(2-hydroxyacyl)glutathione + H2O = a 2-hydroxy carboxylate + glutathione + H(+). It participates in secondary metabolite metabolism; methylglyoxal degradation; (R)-lactate from methylglyoxal: step 2/2. In terms of biological role, thiolesterase that catalyzes the hydrolysis of S-D-lactoyl-glutathione to form glutathione and D-lactic acid. The chain is Hydroxyacylglutathione hydrolase from Escherichia coli (strain ATCC 8739 / DSM 1576 / NBRC 3972 / NCIMB 8545 / WDCM 00012 / Crooks).